A 122-amino-acid polypeptide reads, in one-letter code: Large ribosomal subunit protein uL14 (122 aa).

It belongs to the universal ribosomal protein uL14 family. As to quaternary structure, part of the 50S ribosomal subunit. Forms a cluster with proteins L3 and L19. In the 70S ribosome, L14 and L19 interact and together make contacts with the 16S rRNA in bridges B5 and B8.

Binds to 23S rRNA. Forms part of two intersubunit bridges in the 70S ribosome. The polypeptide is Large ribosomal subunit protein uL14 (Coxiella burnetii (strain RSA 331 / Henzerling II)).